The sequence spans 242 residues: Protein odd-skipped-related 1 (242 aa).

C2H2-type zinc fingers lie at residues 128–150 (FICK…ERTH), 156–178 (FHCE…KYIH), and 184–207 (HKCE…SCHH).

Belongs to the Odd C2H2-type zinc-finger protein family.

The protein localises to the nucleus. May function as transcription regulator. Essential for larval development. Required for morphogenesis and function of the digestive tract. This Caenorhabditis elegans protein is Protein odd-skipped-related 1.